A 517-amino-acid chain; its full sequence is Cytochrome P450 monooxygenase cdmJ (517 aa).

A helical transmembrane segment spans residues 15–35 (YMWSLTLFALCLSAILMFPFL). The N-linked (GlcNAc...) asparagine glycan is linked to N404. C451 is a binding site for heme.

This sequence belongs to the cytochrome P450 family. Requires heme as cofactor.

Its subcellular location is the membrane. The catalysed reaction is 3-hydroxypentacecilide A + NADPH + O2 + H(+) = chrodrimanin F + NADP(+) + H2O. The enzyme catalyses chrodrimanin C + NADPH + O2 + H(+) = chrodrimanin H + NADP(+) + H2O. It catalyses the reaction verruculide A + NADPH + O2 + H(+) = chrodrimanin E + NADP(+) + H2O. It carries out the reaction chrodrimanin T + NADPH + O2 + H(+) = chrodrimanin A + NADP(+) + H2O. The protein operates within secondary metabolite biosynthesis; terpenoid biosynthesis. Cytochrome P450 monooxygenase; part of the gene cluster that mediates the biosynthesis of chrodrimanin B, a meroterpenoid that acts as a potent blocker of insect GABA-gated chloride channels. The first step of the pathway is the biosynthesis of 6-hydroxymellein by the polyketide synthase cdmE. The prenyltransferase cdmH acts as a 6-hydroxymellein 5-farnesyltransferase and produces the hydrophobic metabolite verruculide C. The FAD-dependent monooxygenase cdmI further converts verruculide C into verruculide B. The terpene cyclase cdmG then produced the pentacyclic molecule 3-hydroxypentacecilide A, the backbone structure of chrodrimanin B, via folding the farnesyl moiety of the substrate into the chair-boat conformation. The short-chain dehydrogenase/reductase cdmF functions as the 3-OH dehydrogenase that oxidizes the C-3 hydroxyl group of 3-hydroxypentacecilide A and produces chrodrimanin C, the dehydrogenated product of 3-hydroxypentacecilide A. The cytochrome P450 monooxygenase cdmJ then accepts both 3-hydroxypentacecilide A and chrodrimanin C and functions as a C-7-beta-hydroxylase to produce respectively chrodrimanin H and chrodrimanin F. The dioxygenase cdmA accepts chrodrimanin H to afford chrodrimanin E, which is further transformed to chrodrimanin A by the dioxygenase cdmD. CdmA can also accept chrodrimanin C as substrate to convert it into verruculide A, which is further converted into chrodrimanin T by cdmD. The last step of the biosynthesis is proposed to be performed by the acetyltransferase cdmC which acetylates chrodrimanin A to yield chrodrimanin B. The pathway may also lead to the production of additional shunt products, including chrodrimanins T and U. The chain is Cytochrome P450 monooxygenase cdmJ from Talaromyces verruculosus (Penicillium verruculosum).